The chain runs to 333 residues: NADH-quinone oxidoreductase subunit H (333 aa).

A run of 8 helical transmembrane segments spans residues 15–35, 88–108, 117–137, 159–179, 191–211, 250–270, 273–293, and 313–333; these read LVIF…FVTY, FILA…TLPF, IGVG…GVVA, ISYE…TGSL, VWYI…AVAE, LFAM…PVMF, FIPG…VLIW, and VLFP…ELFF.

This sequence belongs to the complex I subunit 1 family. NDH-1 is composed of 14 different subunits. Subunits NuoA, H, J, K, L, M, N constitute the membrane sector of the complex.

It localises to the cell membrane. The enzyme catalyses a quinone + NADH + 5 H(+)(in) = a quinol + NAD(+) + 4 H(+)(out). NDH-1 shuttles electrons from NADH, via FMN and iron-sulfur (Fe-S) centers, to quinones in the respiratory chain. The immediate electron acceptor for the enzyme in this species is believed to be ubiquinone. Couples the redox reaction to proton translocation (for every two electrons transferred, four hydrogen ions are translocated across the cytoplasmic membrane), and thus conserves the redox energy in a proton gradient. This subunit may bind ubiquinone. In Geobacillus sp. (strain WCH70), this protein is NADH-quinone oxidoreductase subunit H.